A 262-amino-acid chain; its full sequence is Elongator complex protein 5 (262 aa).

Disordered stretches follow at residues 181-214 (TPLD…FKIE) and 229-262 (PYER…DLCI). Polar residues predominate over residues 200–211 (AEQTTEPASSTF). Acidic residues predominate over residues 246–262 (DADDDFDEEDPDEDLCI).

It belongs to the ELP5 family. As to quaternary structure, component of the elongator complex composed of Elp1, Elp2, Elp3, Elp4, Elp5 and Elp6. The elongator complex associates with and stabilizes microtubules; efficient interaction requires the full complex.

The protein localises to the cytoplasm. It localises to the nucleus. Its subcellular location is the cytoskeleton. It is found in the spindle. Its pathway is tRNA modification; 5-methoxycarbonylmethyl-2-thiouridine-tRNA biosynthesis. Its function is as follows. Component of the elongator complex, which is required for multiple tRNA modifications, including mcm5U (5-methoxycarbonylmethyl uridine), mcm5s2U (5-methoxycarbonylmethyl-2-thiouridine), and ncm5U (5-carbamoylmethyl uridine). The elongator complex catalyzes the formation of carboxymethyluridine in the wobble base at position 34 in tRNAs. Binding by the elongator complex stabilizes microtubules and promotes their growth. This induces central spindle asymmetry, promoting polarized signaling endosome trafficking during asymmetric cell division and cell fate assignation of sensory organ precursor cells. The protein is Elongator complex protein 5 of Drosophila melanogaster (Fruit fly).